Reading from the N-terminus, the 1310-residue chain is Zinc finger protein 521 (1310 aa).

Basic residues predominate over residues 1 to 10; that stretch reads MSRRKQAKPR. Residues 1 to 46 are disordered; the sequence is MSRRKQAKPRSLKDPNCKLEDTSEDGESPDCKKRQEEGDELEEEEA. The segment covering 11-21 has biased composition (basic and acidic residues); it reads SLKDPNCKLED. Residues 48–68 form a C2H2-type 1; degenerate zinc finger; it reads HSCDSCLQVFESLSDITEHKI. The segment at 82 to 106 is disordered; that stretch reads DPTCSWPASSPSSKDQASPIHGEGF. Positions 87-97 are enriched in polar residues; the sequence is WPASSPSSKDQ. 7 C2H2-type zinc fingers span residues 119–141, 147–169, 175–197, 203–225, 247–270, 282–305, and 311–333; these read YPCQ…EQSH, FKCT…IKLH, YHCS…LKTH, YKCA…MQVH, QKCS…AECH, LQCM…EQIH, and NSCN…MDSH. Residues 404–428 form a C2H2-type 9; degenerate zinc finger; that stretch reads YSCIYCSKQLFSSLAVLQIHLKTMH. C2H2-type zinc fingers lie at residues 436 to 459, 476 to 499, and 512 to 535; these read HICQ…KQVH, YQCN…RSSH, and FFCP…RQVH. A C2H2-type 13; atypical zinc finger spans residues 559-584; sequence YSCSYCTNSPIFNSVLKLNKHIKENH. 7 consecutive C2H2-type zinc fingers follow at residues 633–655, 663–685, 693–716, 721–744, 751–774, 782–804, and 808–831; these read YICN…LKTH, LTCP…VTIH, YICE…LDMH, FRCT…AVKH, YRCT…KHNH, HKCI…ITTH, and YNCK…REKH. The segment at 885 to 907 adopts a C2H2-type 21; degenerate zinc-finger fold; sequence YGCDICGAAYTMESLLQNHQLRD. 3 consecutive C2H2-type zinc fingers follow at residues 929-951, 958-980, and 1019-1041; these read YKCN…MQTH, YMCP…KVTH, and FRCV…GTFH. The C2H2-type 25; degenerate zinc finger occupies 1064 to 1082; sequence YKCASCLKEFRSKQDLVKL. 5 C2H2-type zinc fingers span residues 1138 to 1161, 1194 to 1216, 1224 to 1246, 1255 to 1278, and 1285 to 1308; these read TRCS…QTIH, YQCI…VANH, HECK…LIEH, FKCP…FSAH, and YDCA…MSQH.

The protein belongs to the krueppel C2H2-type zinc-finger protein family.

Its subcellular location is the nucleus. Functionally, transcription factor that can both act as an activator or a repressor depending on the context. Involved in BMP signaling and in the regulation of the immature compartment of the hematopoietic system. The polypeptide is Zinc finger protein 521 (znf521) (Xenopus laevis (African clawed frog)).